Here is a 689-residue protein sequence, read N- to C-terminus: Glycine--tRNA ligase beta subunit (689 aa).

The protein belongs to the class-II aminoacyl-tRNA synthetase family. Tetramer of two alpha and two beta subunits.

It is found in the cytoplasm. It catalyses the reaction tRNA(Gly) + glycine + ATP = glycyl-tRNA(Gly) + AMP + diphosphate. The protein is Glycine--tRNA ligase beta subunit of Dictyoglomus thermophilum (strain ATCC 35947 / DSM 3960 / H-6-12).